A 432-amino-acid chain; its full sequence is Enolase (432 aa).

Glutamine 163 is a (2R)-2-phosphoglycerate binding site. The Proton donor role is filled by glutamate 205. Mg(2+) is bound by residues aspartate 241, glutamate 289, and aspartate 316. (2R)-2-phosphoglycerate-binding residues include lysine 341, arginine 370, serine 371, and lysine 392. The Proton acceptor role is filled by lysine 341.

This sequence belongs to the enolase family. Requires Mg(2+) as cofactor.

The protein localises to the cytoplasm. The protein resides in the secreted. It is found in the cell surface. It catalyses the reaction (2R)-2-phosphoglycerate = phosphoenolpyruvate + H2O. Its pathway is carbohydrate degradation; glycolysis; pyruvate from D-glyceraldehyde 3-phosphate: step 4/5. Catalyzes the reversible conversion of 2-phosphoglycerate (2-PG) into phosphoenolpyruvate (PEP). It is essential for the degradation of carbohydrates via glycolysis. In Treponema pallidum (strain Nichols), this protein is Enolase.